The sequence spans 49 residues: GCKGFLVKCDSNSECCKTAIVKGKKKQLSCLCGAWGAGCSCSFRCGNRC.

Intrachain disulfides connect Cys2-Cys16, Cys9-Cys30, Cys15-Cys41, Cys32-Cys39, and Cys45-Cys49.

In terms of tissue distribution, expressed by the venom gland.

The protein resides in the secreted. Functionally, potent toxin that may paralyze and/or kill insect pests such as H.virescens (lepidoptera), S.exigua (beet armyworm) and M.sexta (tobacco hornworm). In Plectreurys tristis (Spider), this protein is U3-plectoxin-Pt1a.